The chain runs to 108 residues: ATP-dependent Clp protease adapter protein ClpS (108 aa).

It belongs to the ClpS family. Binds to the N-terminal domain of the chaperone ClpA.

Functionally, involved in the modulation of the specificity of the ClpAP-mediated ATP-dependent protein degradation. This chain is ATP-dependent Clp protease adapter protein ClpS, found in Leptospira borgpetersenii serovar Hardjo-bovis (strain JB197).